Here is a 506-residue protein sequence, read N- to C-terminus: Glutamate--tRNA ligase (506 aa).

The 'HIGH' region motif lies at 12–22 (PSPTGDPHVGT). The short motif at 253-257 (KLSKR) is the 'KMSKS' region element. Lys-256 lines the ATP pocket.

This sequence belongs to the class-I aminoacyl-tRNA synthetase family. Glutamate--tRNA ligase type 1 subfamily. In terms of assembly, monomer.

It localises to the cytoplasm. It catalyses the reaction tRNA(Glu) + L-glutamate + ATP = L-glutamyl-tRNA(Glu) + AMP + diphosphate. Functionally, catalyzes the attachment of glutamate to tRNA(Glu) in a two-step reaction: glutamate is first activated by ATP to form Glu-AMP and then transferred to the acceptor end of tRNA(Glu). In Chlamydia trachomatis serovar L2 (strain ATCC VR-902B / DSM 19102 / 434/Bu), this protein is Glutamate--tRNA ligase.